A 199-amino-acid chain; its full sequence is Acireductone dioxygenase 1 (199 aa).

The Fe(2+) site is built by H99, H101, E105, and H144. Ni(2+) contacts are provided by H99, H101, E105, and H144.

Belongs to the acireductone dioxygenase (ARD) family. Fe(2+) is required as a cofactor. Requires Ni(2+) as cofactor.

Its subcellular location is the cytoplasm. The protein resides in the nucleus. The catalysed reaction is 1,2-dihydroxy-5-(methylsulfanyl)pent-1-en-3-one + O2 = 4-methylsulfanyl-2-oxobutanoate + formate + 2 H(+). The enzyme catalyses 1,2-dihydroxy-5-(methylsulfanyl)pent-1-en-3-one + O2 = 3-(methylsulfanyl)propanoate + CO + formate + 2 H(+). Its pathway is amino-acid biosynthesis; L-methionine biosynthesis via salvage pathway; L-methionine from S-methyl-5-thio-alpha-D-ribose 1-phosphate: step 5/6. In terms of biological role, catalyzes 2 different reactions between oxygen and the acireductone 1,2-dihydroxy-3-keto-5-methylthiopentene (DHK-MTPene) depending upon the metal bound in the active site. Fe-containing acireductone dioxygenase (Fe-ARD) produces formate and 2-keto-4-methylthiobutyrate (KMTB), the alpha-ketoacid precursor of methionine in the methionine recycle pathway. Ni-containing acireductone dioxygenase (Ni-ARD) produces methylthiopropionate, carbon monoxide and formate, and does not lie on the methionine recycle pathway. This is Acireductone dioxygenase 1 (ARD1) from Arabidopsis thaliana (Mouse-ear cress).